A 1099-amino-acid chain; its full sequence is R3H domain-containing protein 1 (1099 aa).

The disordered stretch occupies residues 111 to 146 (SFEKEEKPSKDEAEKEKASDKLPRKMLSRDSSQEYT). The span at 112-142 (FEKEEKPSKDEAEKEKASDKLPRKMLSRDSS) shows a compositional bias: basic and acidic residues. Residues 168-231 (RMMLLKLEQE…SVIVNKTSNT (64 aa)) form the R3H domain. A phosphoserine mark is found at S187 and S262. Residues 232-302 (RIPDQKFNEH…ARDRIFSQDS (71 aa)) enclose the SUZ domain. The disordered stretch occupies residues 267–287 (DNQMRIRLKDDRRSKSIEERE). S302 is subject to Phosphoserine. The tract at residues 331–370 (RVNKDASGRSTNSHQSSTENELKYSEPRPWSSTDSDSSLR) is disordered. Polar residues-rich tracts occupy residues 338-349 (GRSTNSHQSSTE) and 360-370 (WSSTDSDSSLR). A phosphoserine mark is found at S380, S381, and S393. Disordered regions lie at residues 387–439 (VLTR…SSHG), 490–537 (QTGQ…AANH), 583–625 (YIMT…HPVS), and 797–825 (EQVQFPRTTSPCSSQQLQGHQCTAGPPPP). Positions 391 to 422 (GDSSGSSKSIGRLSKTGSESSGSVGSSTGSLS) are enriched in low complexity. 2 stretches are compositionally biased toward pro residues: residues 519–532 (PGPPQPPLPAPPQQ) and 588–611 (APPPHPPPPPPPPPPPPPLPPGQP). Positions 797–817 (EQVQFPRTTSPCSSQQLQGHQ) are enriched in polar residues. Asymmetric dimethylarginine; alternate is present on R929. R929 bears the Omega-N-methylarginine; alternate mark. A disordered region spans residues 941 to 977 (PPAVLHGHIPNQQGQPGSRHGNRGRRQAKKAASTDLG). The segment covering 960–969 (HGNRGRRQAK) has biased composition (basic residues). At S973 the chain carries Phosphoserine.

This is R3H domain-containing protein 1 (R3HDM1) from Homo sapiens (Human).